Reading from the N-terminus, the 322-residue chain is Elongation factor Ts, mitochondrial (322 aa).

This sequence belongs to the EF-Ts family.

The protein localises to the mitochondrion. Its function is as follows. Associates with the EF-Tu.GDP complex and induces the exchange of GDP to GTP. It remains bound to the aminoacyl-tRNA.EF-Tu.GTP complex up to the GTP hydrolysis stage on the ribosome. In Chlamydomonas reinhardtii (Chlamydomonas smithii), this protein is Elongation factor Ts, mitochondrial.